Here is a 335-residue protein sequence, read N- to C-terminus: RVS161-like protein RVS162 (335 aa).

In terms of domain architecture, BAR spans 17 to 310 (VMLKTGHIEQ…LDAQTRQDYI (294 aa)). Residues 30-56 (KEYEFQEKRYRTMEENSIKLQKNLRLY) adopt a coiled-coil conformation. A disordered region spans residues 105 to 127 (HEEEGEEKEEEENDNTTTTTTTT). Positions 107–118 (EEGEEKEEEEND) are enriched in acidic residues. Residues 222–259 (TNIIELNHNQYEEKLKIYNQELTEVESKYVEINNQLLI) are a coiled coil.

It localises to the cytoplasm. It is found in the cytoskeleton. Its function is as follows. Component of a cytoskeletal structure that is required for membrane curvature. The polypeptide is RVS161-like protein RVS162 (Candida albicans (strain SC5314 / ATCC MYA-2876) (Yeast)).